Here is a 234-residue protein sequence, read N- to C-terminus: MTNVIEARGIEKVFHNGDEETRVLKGIDLTLGQGELAAMVGASGSGKSTLLSIIGLLLRPTAGTLSISGERVDDLSERMRARFRNQRLGFVFQFHHLLPDFTAMENVAFPAAAPGGGISRAMRTRARDLLARVGLEDRIDFPAARLSGGQKQRVAIARALMNRPDLIIADEPTGNLDRESADRVLDLMREVNREEGATFLICTHDDGVAARCGRRLTLSDGRLTSNVRDPGGFS.

Residues 5-231 (IEARGIEKVF…RLTSNVRDPG (227 aa)) enclose the ABC transporter domain. Position 41–48 (41–48 (GASGSGKS)) interacts with ATP.

This sequence belongs to the ABC transporter superfamily. Lipoprotein translocase (TC 3.A.1.125) family. In terms of assembly, the complex is composed of two ATP-binding proteins (LolD) and two transmembrane proteins (LolC and LolE).

It is found in the cell inner membrane. Its function is as follows. Part of the ABC transporter complex LolCDE involved in the translocation of mature outer membrane-directed lipoproteins, from the inner membrane to the periplasmic chaperone, LolA. Responsible for the formation of the LolA-lipoprotein complex in an ATP-dependent manner. This chain is Lipoprotein-releasing system ATP-binding protein LolD 1, found in Caulobacter vibrioides (strain ATCC 19089 / CIP 103742 / CB 15) (Caulobacter crescentus).